Here is a 288-residue protein sequence, read N- to C-terminus: NAD kinase (288 aa).

Asp73 acts as the Proton acceptor in catalysis. NAD(+)-binding positions include 73–74 (DG), Arg78, 144–145 (NE), Asp174, 185–190 (TAYSLS), and Ala209.

It belongs to the NAD kinase family. A divalent metal cation serves as cofactor.

It is found in the cytoplasm. The catalysed reaction is NAD(+) + ATP = ADP + NADP(+) + H(+). Involved in the regulation of the intracellular balance of NAD and NADP, and is a key enzyme in the biosynthesis of NADP. Catalyzes specifically the phosphorylation on 2'-hydroxyl of the adenosine moiety of NAD to yield NADP. This chain is NAD kinase, found in Porphyromonas gingivalis (strain ATCC 33277 / DSM 20709 / CIP 103683 / JCM 12257 / NCTC 11834 / 2561).